Here is a 550-residue protein sequence, read N- to C-terminus: Glucose-6-phosphate isomerase (550 aa).

E357 (proton donor) is an active-site residue. Residues H388 and K516 contribute to the active site.

This sequence belongs to the GPI family.

Its subcellular location is the cytoplasm. The enzyme catalyses alpha-D-glucose 6-phosphate = beta-D-fructose 6-phosphate. It participates in carbohydrate biosynthesis; gluconeogenesis. It functions in the pathway carbohydrate degradation; glycolysis; D-glyceraldehyde 3-phosphate and glycerone phosphate from D-glucose: step 2/4. Catalyzes the reversible isomerization of glucose-6-phosphate to fructose-6-phosphate. The polypeptide is Glucose-6-phosphate isomerase (Psychromonas ingrahamii (strain DSM 17664 / CCUG 51855 / 37)).